The following is an 896-amino-acid chain: Translation initiation factor IF-2 (896 aa).

The interval 46-315 (LAHLNRQHGG…FNKPAQPVER (270 aa)) is disordered. Basic and acidic residues predominate over residues 99-247 (SASEEQEREE…RKQQEKEDVH (149 aa)). The span at 269-278 (SRKRGKKRRR) shows a compositional bias: basic residues. Residues 279 to 288 (KDEESDDTPR) are compositionally biased toward basic and acidic residues. Residues 396–565 (PRAPVVTVMG…LLQSEVLDLR (170 aa)) form the tr-type G domain. Residues 405–412 (GHVDHGKT) form a G1 region. Position 405 to 412 (405 to 412 (GHVDHGKT)) interacts with GTP. Positions 430 to 434 (GITQH) are G2. The G3 stretch occupies residues 451–454 (DTPG). GTP contacts are provided by residues 451–455 (DTPGH) and 505–508 (NKMD). The tract at residues 505-508 (NKMD) is G4. The G5 stretch occupies residues 541-543 (SAH).

The protein belongs to the TRAFAC class translation factor GTPase superfamily. Classic translation factor GTPase family. IF-2 subfamily.

The protein localises to the cytoplasm. Functionally, one of the essential components for the initiation of protein synthesis. Protects formylmethionyl-tRNA from spontaneous hydrolysis and promotes its binding to the 30S ribosomal subunits. Also involved in the hydrolysis of GTP during the formation of the 70S ribosomal complex. In Idiomarina loihiensis (strain ATCC BAA-735 / DSM 15497 / L2-TR), this protein is Translation initiation factor IF-2.